Reading from the N-terminus, the 127-residue chain is Large ribosomal subunit protein bL12 (127 aa).

The protein belongs to the bacterial ribosomal protein bL12 family. Homodimer. Part of the ribosomal stalk of the 50S ribosomal subunit. Forms a multimeric L10(L12)X complex, where L10 forms an elongated spine to which 2 to 4 L12 dimers bind in a sequential fashion. Binds GTP-bound translation factors.

Forms part of the ribosomal stalk which helps the ribosome interact with GTP-bound translation factors. Is thus essential for accurate translation. This is Large ribosomal subunit protein bL12 from Syntrophobacter fumaroxidans (strain DSM 10017 / MPOB).